We begin with the raw amino-acid sequence, 169 residues long: Phosphopantetheine adenylyltransferase (169 aa).

Serine 10 serves as a coordination point for substrate. Residues 10-11 (SF) and histidine 18 each bind ATP. Residues lysine 42, threonine 79, and arginine 93 each coordinate substrate. Residues 94–96 (GLR), glutamate 104, and 129–135 (VRPITAT) contribute to the ATP site.

The protein belongs to the bacterial CoaD family. As to quaternary structure, homohexamer. Mg(2+) is required as a cofactor.

It localises to the cytoplasm. It carries out the reaction (R)-4'-phosphopantetheine + ATP + H(+) = 3'-dephospho-CoA + diphosphate. It functions in the pathway cofactor biosynthesis; coenzyme A biosynthesis; CoA from (R)-pantothenate: step 4/5. In terms of biological role, reversibly transfers an adenylyl group from ATP to 4'-phosphopantetheine, yielding dephospho-CoA (dPCoA) and pyrophosphate. The chain is Phosphopantetheine adenylyltransferase from Rhodopseudomonas palustris (strain TIE-1).